A 336-amino-acid polypeptide reads, in one-letter code: Glyceraldehyde-3-phosphate dehydrogenase 1 (336 aa).

NAD(+) is bound by residues 12–13 (RI), Asp34, and Ser120. D-glyceraldehyde 3-phosphate is bound by residues 150–152 (SCT), Thr181, Arg198, 211–212 (TG), and Arg234. Cys151 functions as the Nucleophile in the catalytic mechanism. Asn316 lines the NAD(+) pocket.

Belongs to the glyceraldehyde-3-phosphate dehydrogenase family. In terms of assembly, homotetramer.

It is found in the cytoplasm. The catalysed reaction is D-glyceraldehyde 3-phosphate + phosphate + NAD(+) = (2R)-3-phospho-glyceroyl phosphate + NADH + H(+). It functions in the pathway carbohydrate degradation; glycolysis; pyruvate from D-glyceraldehyde 3-phosphate: step 1/5. Functionally, catalyzes the oxidative phosphorylation of glyceraldehyde 3-phosphate (G3P) to 1,3-bisphosphoglycerate (BPG) using the cofactor NAD. The first reaction step involves the formation of a hemiacetal intermediate between G3P and a cysteine residue, and this hemiacetal intermediate is then oxidized to a thioester, with concomitant reduction of NAD to NADH. The reduced NADH is then exchanged with the second NAD, and the thioester is attacked by a nucleophilic inorganic phosphate to produce BPG. The protein is Glyceraldehyde-3-phosphate dehydrogenase 1 (gapA1) of Staphylococcus epidermidis (strain ATCC 35984 / DSM 28319 / BCRC 17069 / CCUG 31568 / BM 3577 / RP62A).